A 107-amino-acid chain; its full sequence is Ribonuclease P protein component 4 (107 aa).

The Zn(2+) site is built by cysteine 66, cysteine 69, cysteine 92, and cysteine 95.

Belongs to the eukaryotic/archaeal RNase P protein component 4 family. As to quaternary structure, consists of a catalytic RNA component and at least 4-5 protein subunits. Zn(2+) serves as cofactor.

The protein localises to the cytoplasm. The enzyme catalyses Endonucleolytic cleavage of RNA, removing 5'-extranucleotides from tRNA precursor.. Part of ribonuclease P, a protein complex that generates mature tRNA molecules by cleaving their 5'-ends. The chain is Ribonuclease P protein component 4 from Methanosarcina acetivorans (strain ATCC 35395 / DSM 2834 / JCM 12185 / C2A).